The primary structure comprises 163 residues: Peptidyl-prolyl cis-trans isomerase-like 1 (163 aa).

Residues Met-1–Val-155 form the PPIase cyclophilin-type domain.

The protein belongs to the cyclophilin-type PPIase family. PPIL1 subfamily.

It catalyses the reaction [protein]-peptidylproline (omega=180) = [protein]-peptidylproline (omega=0). In terms of biological role, PPIases accelerate the folding of proteins. It catalyzes the cis-trans isomerization of proline imidic peptide bonds in oligopeptides. This is Peptidyl-prolyl cis-trans isomerase-like 1 (ppi-1) from Neurospora crassa (strain ATCC 24698 / 74-OR23-1A / CBS 708.71 / DSM 1257 / FGSC 987).